The chain runs to 256 residues: Thiazole synthase (256 aa).

Lys-95 serves as the catalytic Schiff-base intermediate with DXP. 1-deoxy-D-xylulose 5-phosphate-binding positions include Gly-156, 182 to 183 (AG), and 204 to 205 (NT).

Belongs to the ThiG family. As to quaternary structure, homotetramer. Forms heterodimers with either ThiH or ThiS.

Its subcellular location is the cytoplasm. It carries out the reaction [ThiS sulfur-carrier protein]-C-terminal-Gly-aminoethanethioate + 2-iminoacetate + 1-deoxy-D-xylulose 5-phosphate = [ThiS sulfur-carrier protein]-C-terminal Gly-Gly + 2-[(2R,5Z)-2-carboxy-4-methylthiazol-5(2H)-ylidene]ethyl phosphate + 2 H2O + H(+). It functions in the pathway cofactor biosynthesis; thiamine diphosphate biosynthesis. Its function is as follows. Catalyzes the rearrangement of 1-deoxy-D-xylulose 5-phosphate (DXP) to produce the thiazole phosphate moiety of thiamine. Sulfur is provided by the thiocarboxylate moiety of the carrier protein ThiS. In vitro, sulfur can be provided by H(2)S. This Escherichia coli O81 (strain ED1a) protein is Thiazole synthase.